A 201-amino-acid polypeptide reads, in one-letter code: Ras-related protein RabA (201 aa).

15–22 serves as a coordination point for GTP; it reads GDSGVGKS. The Effector region signature appears at 37–45; sequence YISTIGVDF. Residues 63–67 and 121–124 contribute to the GTP site; these read DTAGQ and NKSD. Cysteine methyl ester is present on C198. C198 is lipidated: S-geranylgeranyl cysteine. A propeptide spans 199-201 (removed in mature form); the sequence is IIN.

This sequence belongs to the small GTPase superfamily. Rab family.

The protein resides in the cell membrane. The protein is Ras-related protein RabA (rabA) of Dictyostelium discoideum (Social amoeba).